The chain runs to 234 residues: Glucosamine-6-phosphate deaminase (234 aa).

The Proton acceptor; for enolization step role is filled by Asp-63. The For ring-opening step role is filled by Asn-129. Residue His-131 is the Proton acceptor; for ring-opening step of the active site. The active-site For ring-opening step is the Glu-136.

It belongs to the glucosamine/galactosamine-6-phosphate isomerase family. NagB subfamily.

It carries out the reaction alpha-D-glucosamine 6-phosphate + H2O = beta-D-fructose 6-phosphate + NH4(+). It functions in the pathway amino-sugar metabolism; N-acetylneuraminate degradation; D-fructose 6-phosphate from N-acetylneuraminate: step 5/5. Catalyzes the reversible isomerization-deamination of glucosamine 6-phosphate (GlcN6P) to form fructose 6-phosphate (Fru6P) and ammonium ion. The protein is Glucosamine-6-phosphate deaminase of Listeria innocua serovar 6a (strain ATCC BAA-680 / CLIP 11262).